We begin with the raw amino-acid sequence, 496 residues long: Probable cytosol aminopeptidase (496 aa).

Lysine 257 and aspartate 262 together coordinate Mn(2+). Residue lysine 269 is part of the active site. Residues aspartate 281, aspartate 341, and glutamate 343 each contribute to the Mn(2+) site. Arginine 345 is a catalytic residue.

Belongs to the peptidase M17 family. Mn(2+) is required as a cofactor.

Its subcellular location is the cytoplasm. It catalyses the reaction Release of an N-terminal amino acid, Xaa-|-Yaa-, in which Xaa is preferably Leu, but may be other amino acids including Pro although not Arg or Lys, and Yaa may be Pro. Amino acid amides and methyl esters are also readily hydrolyzed, but rates on arylamides are exceedingly low.. The catalysed reaction is Release of an N-terminal amino acid, preferentially leucine, but not glutamic or aspartic acids.. Presumably involved in the processing and regular turnover of intracellular proteins. Catalyzes the removal of unsubstituted N-terminal amino acids from various peptides. The sequence is that of Probable cytosol aminopeptidase from Prochlorococcus marinus (strain SARG / CCMP1375 / SS120).